The primary structure comprises 207 residues: Putative 3-methyladenine DNA glycosylase (207 aa).

It belongs to the DNA glycosylase MPG family.

The polypeptide is Putative 3-methyladenine DNA glycosylase (Listeria welshimeri serovar 6b (strain ATCC 35897 / DSM 20650 / CCUG 15529 / CIP 8149 / NCTC 11857 / SLCC 5334 / V8)).